The chain runs to 174 residues: ATP-dependent protease subunit HslV (174 aa).

T2 is an active-site residue. 3 residues coordinate Na(+): G157, C160, and T163.

It belongs to the peptidase T1B family. HslV subfamily. A double ring-shaped homohexamer of HslV is capped on each side by a ring-shaped HslU homohexamer. The assembly of the HslU/HslV complex is dependent on binding of ATP.

The protein resides in the cytoplasm. It carries out the reaction ATP-dependent cleavage of peptide bonds with broad specificity.. Its activity is regulated as follows. Allosterically activated by HslU binding. Protease subunit of a proteasome-like degradation complex believed to be a general protein degrading machinery. The sequence is that of ATP-dependent protease subunit HslV from Shewanella frigidimarina (strain NCIMB 400).